The primary structure comprises 375 residues: Alcohol dehydrogenase class-3 chain L (375 aa).

Ala1 carries the N-acetylalanine modification. Zn(2+) contacts are provided by Cys46, His68, Cys98, Cys101, Cys104, Cys112, and Cys175.

The protein belongs to the zinc-containing alcohol dehydrogenase family. Class-III subfamily. In terms of assembly, homodimer or heterodimer with H chain. The cofactor is Zn(2+).

The protein localises to the cytoplasm. The enzyme catalyses a primary alcohol + NAD(+) = an aldehyde + NADH + H(+). The catalysed reaction is a secondary alcohol + NAD(+) = a ketone + NADH + H(+). It carries out the reaction S-(hydroxymethyl)glutathione + NADP(+) = S-formylglutathione + NADPH + H(+). It catalyses the reaction S-(hydroxymethyl)glutathione + NAD(+) = S-formylglutathione + NADH + H(+). Functionally, class-III ADH is remarkably ineffective in oxidizing ethanol, but it readily catalyzes the oxidation of long-chain primary alcohols and the oxidation of S-(hydroxymethyl) glutathione. This is Alcohol dehydrogenase class-3 chain L from Gadus morhua (Atlantic cod).